We begin with the raw amino-acid sequence, 94 residues long: Large ribosomal subunit protein bL25 (94 aa).

Belongs to the bacterial ribosomal protein bL25 family. Part of the 50S ribosomal subunit; part of the 5S rRNA/L5/L18/L25 subcomplex. Contacts the 5S rRNA. Binds to the 5S rRNA independently of L5 and L18.

Functionally, this is one of the proteins that binds to the 5S RNA in the ribosome where it forms part of the central protuberance. The protein is Large ribosomal subunit protein bL25 of Pectobacterium carotovorum subsp. carotovorum (strain PC1).